The chain runs to 29 residues: Glucagon (29 aa).

This sequence belongs to the glucagon family.

It is found in the secreted. Glucagon plays a key role in glucose metabolism and homeostasis. Regulates blood glucose by increasing gluconeogenesis and decreasing glycolysis. This Lampetra fluviatilis (European river lamprey) protein is Glucagon (gcg).